Here is a 316-residue protein sequence, read N- to C-terminus: Ribose-phosphate pyrophosphokinase (316 aa).

ATP is bound by residues Asp37–Glu39 and Arg96–Gln97. His130 and Asp171 together coordinate Mg(2+). The active site involves Lys194. Arg196 and Asp221 together coordinate D-ribose 5-phosphate.

This sequence belongs to the ribose-phosphate pyrophosphokinase family. Class I subfamily. In terms of assembly, homohexamer. Mg(2+) serves as cofactor.

It localises to the cytoplasm. It catalyses the reaction D-ribose 5-phosphate + ATP = 5-phospho-alpha-D-ribose 1-diphosphate + AMP + H(+). It functions in the pathway metabolic intermediate biosynthesis; 5-phospho-alpha-D-ribose 1-diphosphate biosynthesis; 5-phospho-alpha-D-ribose 1-diphosphate from D-ribose 5-phosphate (route I): step 1/1. Its function is as follows. Involved in the biosynthesis of the central metabolite phospho-alpha-D-ribosyl-1-pyrophosphate (PRPP) via the transfer of pyrophosphoryl group from ATP to 1-hydroxyl of ribose-5-phosphate (Rib-5-P). This Rhodopirellula baltica (strain DSM 10527 / NCIMB 13988 / SH1) protein is Ribose-phosphate pyrophosphokinase.